A 483-amino-acid polypeptide reads, in one-letter code: Putative inorganic phosphate cotransporter (483 aa).

A run of 7 helical transmembrane segments spans residues 64–84 (YILS…GILA), 90–110 (LRFL…VPVA), 187–207 (IFYV…IFVY), 292–312 (LPYL…DWMI), 349–369 (ALTL…YSGF), 383–403 (FLMS…PIAA), and 420–440 (IVFF…NIFG). The tract at residues 447-483 (WDNPSEDEQKPALESSSTTNPPRLSNGSSAPRAISSS) is disordered. The span at 460-483 (ESSSTTNPPRLSNGSSAPRAISSS) shows a compositional bias: polar residues.

It belongs to the major facilitator superfamily. Sodium/anion cotransporter family.

It is found in the membrane. Functionally, may be an inorganic phosphate cotransporter. In Drosophila ananassae (Fruit fly), this protein is Putative inorganic phosphate cotransporter (Picot).